The following is a 215-amino-acid chain: Beta-crystallin A3 (215 aa).

Position 1 is an N-acetylmethionine (methionine 1). A compositionally biased stretch (low complexity) spans methionine 1–threonine 16. The tract at residues methionine 1 to glycine 29 is disordered. An N-terminal arm region spans residues methionine 1–proline 30. Glutamate 2 carries the N-acetylalanine modification. 2 Beta/gamma crystallin 'Greek key' domains span residues tryptophan 31–serine 70 and glycine 71–cysteine 117. S-glutathionyl cysteine; alternate occurs at positions 82 and 117. Residues cysteine 82 and cysteine 117 each carry the S-methylcysteine; alternate modification. The interval serine 118–glutamate 123 is connecting peptide. 2 Beta/gamma crystallin 'Greek key' domains span residues serine 124–serine 165 and glycine 166–glutamine 214. An S-methylcysteine modification is found at cysteine 185.

The protein belongs to the beta/gamma-crystallin family. As to quaternary structure, homo/heterodimer, or complexes of higher-order. The structure of beta-crystallin oligomers seems to be stabilized through interactions between the N-terminal arms. Interacts with CRYBA1. In terms of processing, specific cleavages in the N-terminal arm occur during lens maturation and give rise to several truncated forms. Cleavages do not seem to have adverse effects on solubility. Post-translationally, S-methylation and glutathionylation occur in normal young lenses and do not seem to be detrimental.

Crystallins are the dominant structural components of the vertebrate eye lens. This chain is Beta-crystallin A3, found in Homo sapiens (Human).